The following is a 448-amino-acid chain: Charged multivesicular body protein 7 (448 aa).

The segment covering 1–12 has biased composition (pro residues); the sequence is MCSPGRAPPGPA. A disordered region spans residues 1–20; it reads MCSPGRAPPGPAPAGDLPPE. Residues 241–392 adopt a coiled-coil conformation; that stretch reads QLMQSEQLLS…DSLLQDSAKE (152 aa).

It belongs to the SNF7 family.

The protein resides in the cytoplasm. It localises to the nucleus envelope. ESCRT-III-like protein required to recruit the ESCRT-III complex to the nuclear envelope (NE) during late anaphase. Together with SPAST, the ESCRT-III complex promotes NE sealing and mitotic spindle disassembly during late anaphase. Recruited to the reforming NE during anaphase by LEMD2. Plays a role in the endosomal sorting pathway. The polypeptide is Charged multivesicular body protein 7 (CHMP7) (Gallus gallus (Chicken)).